Consider the following 565-residue polypeptide: MSEKKLAVNEYLKTDSDYLRGTIQEGLDTAVTGAFSEGDQQLIKFHGFYQQDDRDLRNERKEQKLEPLYSFMLRARVAGGVCSPQQWLAVDDIASNLTSSNSIRLTTRQTFQYHGIPKRNLKTIIQDLDREALDSIAACGDVNRNVMCNPNPVESKLHQQAYAYAKQLSDNMLPHTKAYAEIWLDDEKLVTTEGEEVEPVYGKTYLPRKFKMAVAVPPDNDVDVYTNDLGFVAVAEEGELVGFNMVAGGGMGSTHGEVATFPRLADDFGYIKAEDTLKFAEAVMTVQRDWGNRENRKLSRLKYTIVKHGYDAFKAEVEKRTGIKFEPKRDVVIGDRGDRYGWKQGVDDNWHLTLFIEGGRVKDLPGQPLQTGLREIAKIHQGDFRMTSNQNIIIAGVPAADKDKIEALARQHGLMGKLITETRGHSIACVALPTCALAMAEAERYFPDFLTKVEALQDKHGFLDQGIVIRMTGCPNGCARPFAAEIGLVGKAPGRYNLYLGASFEGTRLNKLYRENIQEAEILAELDSLFARYVAERETGETFGNYTVRSGVVTAVIDAAKDFHG.

The [4Fe-4S] cluster site is built by Cys429, Cys435, Cys474, and Cys478. Residue Cys478 participates in siroheme binding.

This sequence belongs to the nitrite and sulfite reductase 4Fe-4S domain family. As to quaternary structure, alpha(8)-beta(8). The alpha component is a flavoprotein, the beta component is a hemoprotein. Siroheme is required as a cofactor. Requires [4Fe-4S] cluster as cofactor.

The catalysed reaction is hydrogen sulfide + 3 NADP(+) + 3 H2O = sulfite + 3 NADPH + 4 H(+). It participates in sulfur metabolism; hydrogen sulfide biosynthesis; hydrogen sulfide from sulfite (NADPH route): step 1/1. Functionally, component of the sulfite reductase complex that catalyzes the 6-electron reduction of sulfite to sulfide. This is one of several activities required for the biosynthesis of L-cysteine from sulfate. This Shewanella piezotolerans (strain WP3 / JCM 13877) protein is Sulfite reductase [NADPH] hemoprotein beta-component.